The primary structure comprises 362 residues: B3 domain-containing protein IDEF1 (362 aa).

The interval 30 to 91 (VPFPNPFPAP…TPTPTPRGFA (62 aa)) is disordered. Basic residues predominate over residues 48–70 (PHNHNHNHNHNHNIHNSHNHNHN). The TF-B3 DNA-binding region spans 253–355 (LRKELTKSDV…KFIIRGEKAI (103 aa)).

Polyubiquitinated. Ubiquitination leads to its subsequent degradation via the proteasome pathway. As to expression, expressed in roots.

The protein resides in the nucleus. Functionally, transcription regulator involved in iron deficiency response and tolerance. May regulate directly iron transporters or other transcription factors involved in iron-deficiency response. Binds specifically to the DNA sequence 5'-CATGC-3' of the IDE1 element found in the promoter of the barley iron deficiency-inducible gene IDS2. This is B3 domain-containing protein IDEF1 (IDEF1) from Oryza sativa subsp. japonica (Rice).